Here is a 694-residue protein sequence, read N- to C-terminus: Putative L-type lectin-domain containing receptor kinase II.2 (694 aa).

Residues 1–24 form the signal peptide; that stretch reads MAGVLRSLRFWMIICVQVLSLVLA. Residues 25–318 are Extracellular-facing; it reads QDRDEFVYHD…PTSRSKDSKN (294 aa). Residues 27–272 form a legume-lectin like region; it reads RDEFVYHDFS…DQYILGWSFK (246 aa). 10 N-linked (GlcNAc...) asparagine glycosylation sites follow: N57, N58, N73, N131, N172, N183, N201, N208, N240, and N246. The segment at 283-314 is disordered; that stretch reads SKILDPPNRPPPPSSPPPPPPPPPTPPTSRSK. Residues 289–309 show a composition bias toward pro residues; it reads PNRPPPPSSPPPPPPPPPTPP. A helical membrane pass occupies residues 319–339; sequence IIIICVTVTSIAFLLMLGGFL. Over 340-694 the chain is Cytoplasmic; that stretch reads YLYKKKKYAE…EDVTILFGGR (355 aa). The Protein kinase domain occupies 375 to 650; that stretch reads FRENRLLGAG…IQYLEGNATI (276 aa). Residues 381–389 and K403 contribute to the ATP site; that span reads LGAGGFGKV. D500 (proton acceptor) is an active-site residue.

This sequence in the C-terminal section; belongs to the protein kinase superfamily. Ser/Thr protein kinase family. In the N-terminal section; belongs to the leguminous lectin family.

Its subcellular location is the cell membrane. It catalyses the reaction L-seryl-[protein] + ATP = O-phospho-L-seryl-[protein] + ADP + H(+). The catalysed reaction is L-threonyl-[protein] + ATP = O-phospho-L-threonyl-[protein] + ADP + H(+). This is Putative L-type lectin-domain containing receptor kinase II.2 (LECRK22) from Arabidopsis thaliana (Mouse-ear cress).